A 440-amino-acid chain; its full sequence is Chromosome partition protein MukF (440 aa).

Residues 208–236 (LSETSGTLRELQDTLEAAGDKLQANLLRI) form a leucine-zipper region.

This sequence belongs to the MukF family. As to quaternary structure, interacts, and probably forms a ternary complex, with MukE and MukB via its C-terminal region. The complex formation is stimulated by calcium or magnesium. It is required for an interaction between MukE and MukB.

Its subcellular location is the cytoplasm. It localises to the nucleoid. Its function is as follows. Involved in chromosome condensation, segregation and cell cycle progression. May participate in facilitating chromosome segregation by condensation DNA from both sides of a centrally located replisome during cell division. Not required for mini-F plasmid partitioning. Probably acts via its interaction with MukB and MukE. Overexpression results in anucleate cells. It has a calcium binding activity. The polypeptide is Chromosome partition protein MukF (Salmonella agona (strain SL483)).